The primary structure comprises 336 residues: N-lysine methyltransferase KMT5A (336 aa).

Positions 1–112 (MGRGKKMSKP…KPSEQRETEC (112 aa)) are disordered. Positions 67 to 93 (SVAHHESKCPGKPLTETRKKAEVEKKR) are enriched in basic and acidic residues. One can recognise an SET domain in the interval 200–321 (EGMKMDMITG…VGEELLYDYG (122 aa)). Residues 210-212 (KGR), Y255, and 282-283 (NH) contribute to the S-adenosyl-L-methionine site.

This sequence belongs to the class V-like SAM-binding methyltransferase superfamily. Histone-lysine methyltransferase family. PR/SET subfamily.

It is found in the nucleus. The protein resides in the chromosome. It catalyses the reaction L-lysyl(20)-[histone H4] + S-adenosyl-L-methionine = N(6)-methyl-L-lysyl(20)-[histone H4] + S-adenosyl-L-homocysteine + H(+). The enzyme catalyses L-lysyl-[protein] + S-adenosyl-L-methionine = N(6)-methyl-L-lysyl-[protein] + S-adenosyl-L-homocysteine + H(+). In terms of biological role, protein-lysine N-methyltransferase that monomethylates both histones and non-histone proteins. Specifically monomethylates 'Lys-20' of histone H4 (H4K20me1). H4K20me1 is enriched during mitosis and represents a specific tag for epigenetic transcriptional repression. Mainly functions in euchromatin regions, thereby playing a central role in the silencing of euchromatic genes. Required for cell proliferation, probably by contributing to the maintenance of proper higher-order structure of DNA during mitosis. Involved in chromosome condensation and proper cytokinesis. Nucleosomes are preferred as substrate compared to free histones. Mediates monomethylation of p53/TP53 at 'Lys-382', leading to repress p53/TP53-target genes. Plays a negative role in TGF-beta response regulation and a positive role in cell migration. The polypeptide is N-lysine methyltransferase KMT5A (Xenopus tropicalis (Western clawed frog)).